Reading from the N-terminus, the 187-residue chain is UPF0301 protein ETA_28320 (187 aa).

This sequence belongs to the UPF0301 (AlgH) family.

The polypeptide is UPF0301 protein ETA_28320 (Erwinia tasmaniensis (strain DSM 17950 / CFBP 7177 / CIP 109463 / NCPPB 4357 / Et1/99)).